The following is a 155-amino-acid chain: Glutamyl-tRNA(Gln) amidotransferase subunit C, chloroplastic/mitochondrial (155 aa).

The transit peptide at 1 to 52 (MATRALLAVIYASPNRCYISPSRIKIQSLTCSSSSHYYQRQSRKNHRIARSY) directs the protein to the chloroplast and mitochondrion.

This sequence belongs to the GatC family. Subunit of the heterotrimeric GatCAB amidotransferase (AdT) complex, composed of A, B and C subunits.

The protein localises to the mitochondrion. The protein resides in the plastid. It is found in the chloroplast. It catalyses the reaction L-glutamyl-tRNA(Gln) + L-glutamine + ATP + H2O = L-glutaminyl-tRNA(Gln) + L-glutamate + ADP + phosphate + H(+). Allows the formation of correctly charged Gln-tRNA(Gln) through the transamidation of misacylated Glu-tRNA(Gln) in chloroplasts and mitochondria. The reaction takes place in the presence of glutamine and ATP through an activated gamma-phospho-Glu-tRNA(Gln). This chain is Glutamyl-tRNA(Gln) amidotransferase subunit C, chloroplastic/mitochondrial, found in Arabidopsis thaliana (Mouse-ear cress).